We begin with the raw amino-acid sequence, 346 residues long: S-adenosylmethionine:tRNA ribosyltransferase-isomerase (346 aa).

The protein belongs to the QueA family. As to quaternary structure, monomer.

The protein localises to the cytoplasm. The enzyme catalyses 7-aminomethyl-7-carbaguanosine(34) in tRNA + S-adenosyl-L-methionine = epoxyqueuosine(34) in tRNA + adenine + L-methionine + 2 H(+). It participates in tRNA modification; tRNA-queuosine biosynthesis. Transfers and isomerizes the ribose moiety from AdoMet to the 7-aminomethyl group of 7-deazaguanine (preQ1-tRNA) to give epoxyqueuosine (oQ-tRNA). This is S-adenosylmethionine:tRNA ribosyltransferase-isomerase from Chloroherpeton thalassium (strain ATCC 35110 / GB-78).